Reading from the N-terminus, the 156-residue chain is Eosinophil cationic protein 2 (156 aa).

Positions 1-25 (MGPKLLESRLCLLLLLGLVLMLASC) are cleaved as a signal peptide. The active-site Proton acceptor is the His38. Intrachain disulfides connect Cys47/Cys106, Cys61/Cys119, Cys79/Cys134, and Cys86/Cys94. Residue 62-66 (KGLNT) participates in substrate binding. N-linked (GlcNAc...) asparagine glycosylation is found at Asn89, Asn96, and Asn107. The active-site Proton donor is His151.

It belongs to the pancreatic ribonuclease family.

Its subcellular location is the cytoplasmic granule. Functionally, cytotoxin and helminthotoxin with ribonuclease activity. Selectively chemotactic for dendritic cells. Possesses a wide variety of biological activities. This chain is Eosinophil cationic protein 2 (Ear2), found in Mus musculus (Mouse).